Consider the following 591-residue polypeptide: Pentatricopeptide repeat-containing protein At2g35130 (591 aa).

PPR repeat units follow at residues 154–188, 189–223, 227–262, 263–297, 298–332, 333–367, 368–402, 403–437, 438–472, 473–507, 508–542, and 543–573; these read DVIC…RYVP, TEDT…HVSP, GVTV…RCKP, TTET…QCKP, NICT…GLEP, DVYV…GCEP, DRAS…GIAP, TMKS…GVEP, DTFV…PCTA, DIST…NFRP, DVVT…GCAP, and DGGT…MHKG.

Belongs to the PPR family. P subfamily.

This is Pentatricopeptide repeat-containing protein At2g35130 from Arabidopsis thaliana (Mouse-ear cress).